The chain runs to 439 residues: Xylose isomerase (439 aa).

Catalysis depends on residues His-101 and Asp-104. 7 residues coordinate Mg(2+): Glu-232, Glu-268, His-271, Asp-296, Asp-307, Asp-309, and Asp-339.

Belongs to the xylose isomerase family. Homotetramer. The cofactor is Mg(2+).

The protein localises to the cytoplasm. It carries out the reaction alpha-D-xylose = alpha-D-xylulofuranose. The sequence is that of Xylose isomerase from Actinobacillus pleuropneumoniae serotype 5b (strain L20).